Consider the following 176-residue polypeptide: Lipoprotein signal peptidase (176 aa).

3 helical membrane passes run 12–32 (WYWM…WVLA), 67–87 (WQRW…TIWL), and 94–116 (MWRL…IDRL). Residues Asp123 and Asp141 contribute to the active site. A helical membrane pass occupies residues 137–157 (FNIADSAICVGAALIIIDSII).

Belongs to the peptidase A8 family.

The protein resides in the cell inner membrane. It carries out the reaction Release of signal peptides from bacterial membrane prolipoproteins. Hydrolyzes -Xaa-Yaa-Zaa-|-(S,diacylglyceryl)Cys-, in which Xaa is hydrophobic (preferably Leu), and Yaa (Ala or Ser) and Zaa (Gly or Ala) have small, neutral side chains.. The protein operates within protein modification; lipoprotein biosynthesis (signal peptide cleavage). This protein specifically catalyzes the removal of signal peptides from prolipoproteins. The sequence is that of Lipoprotein signal peptidase from Shewanella woodyi (strain ATCC 51908 / MS32).